Here is a 194-residue protein sequence, read N- to C-terminus: dITP/XTP pyrophosphatase (194 aa).

8 to 13 (TNNPHK) lines the substrate pocket. Residue D69 is the Proton acceptor of the active site. D69 is a binding site for Mg(2+). Residues T70, 150–153 (FGYD), K173, and 178–179 (HR) contribute to the substrate site.

This sequence belongs to the HAM1 NTPase family. As to quaternary structure, homodimer. Mg(2+) is required as a cofactor.

The catalysed reaction is XTP + H2O = XMP + diphosphate + H(+). The enzyme catalyses dITP + H2O = dIMP + diphosphate + H(+). It carries out the reaction ITP + H2O = IMP + diphosphate + H(+). Its function is as follows. Pyrophosphatase that catalyzes the hydrolysis of nucleoside triphosphates to their monophosphate derivatives, with a high preference for the non-canonical purine nucleotides XTP (xanthosine triphosphate), dITP (deoxyinosine triphosphate) and ITP. Seems to function as a house-cleaning enzyme that removes non-canonical purine nucleotides from the nucleotide pool, thus preventing their incorporation into DNA/RNA and avoiding chromosomal lesions. In Porphyromonas gingivalis (strain ATCC BAA-308 / W83), this protein is dITP/XTP pyrophosphatase.